A 372-amino-acid chain; its full sequence is Oxidoreductase ptaL (372 aa).

The signal sequence occupies residues 1–16 (MKHIVIIGGGFAGVST). Residues 8 to 12 (GGGFA) and Arg51 each bind 6-hydroxy-FAD. N-linked (GlcNAc...) asparagine glycosylation is present at Asn251. Position 285 (Asp285) interacts with 6-hydroxy-FAD.

This sequence belongs to the FAD-dependent oxidoreductase family. 6-hydroxy-FAD is required as a cofactor.

The protein operates within secondary metabolite biosynthesis. Functionally, oxidoreductase; part of the gene cluster that mediates the biosynthesis of pestheic acid, a diphenyl ether which is a biosynthetic precursor of the unique chloropupukeananes. The biosynthesis initiates from condensation of acetate and malonate units catalyzed by the non-reducing PKS ptaA. As the ptaA protein is TE/CLC domain-deficient, hydrolysis and Claisen cyclization of the polyketide could be catalyzed by ptaB containing a beta-lactamase domain. The ptaB protein might hydrolyze the thioester bond between the ACP of ptaA and the intermediate to release atrochrysone carboxylic acid, which is spontaneously dehydrated to form endocrocin anthrone. Endocrocin anthrone is then converted to endocrocin, catalyzed by the anthrone oxygenase ptaC. Spontaneous decarboxylation of endocrocin occurs to generate emodin. An O-methyltransferase (ptaH or ptaI) could methylate emodin to form physcion. PtaJ could then catalyze the oxidative cleavage of physcion, and rotation of the intermediate could then afford desmethylisosulochrin. PtaF, a putative NADH-dependent oxidoreductase, might also participate in the oxidative cleavage step. Desmethylisosulochrin is then transformed by another O-methyltransferase (ptaH or ptaI) to form isosulochrin. Chlorination of isosulochrin by ptaM in the cyclohexadienone B ring then produces chloroisosulochrin. PtaE is responsible for the oxidative coupling reactions of both benzophenones isosulochrin and chloroisosulochrin to RES-1214-1 and pestheic acid respectively, regardless of chlorination. This chain is Oxidoreductase ptaL, found in Pestalotiopsis fici (strain W106-1 / CGMCC3.15140).